The following is a 526-amino-acid chain: Lysine--tRNA ligase (526 aa).

The short motif at 44 to 52 is the 'HIGH' region element; that stretch reads PSGLPHIGT. A 'KMSKS' region motif is present at residues 290 to 294; that stretch reads KISKS. An ATP-binding site is contributed by Lys-293.

Belongs to the class-I aminoacyl-tRNA synthetase family.

Its subcellular location is the cytoplasm. It carries out the reaction tRNA(Lys) + L-lysine + ATP = L-lysyl-tRNA(Lys) + AMP + diphosphate. In Rickettsia typhi (strain ATCC VR-144 / Wilmington), this protein is Lysine--tRNA ligase.